Reading from the N-terminus, the 305-residue chain is Homoserine kinase (305 aa).

90–100 is a binding site for ATP; that stretch reads PLARGLGSSAS.

Belongs to the GHMP kinase family. Homoserine kinase subfamily.

It localises to the cytoplasm. The enzyme catalyses L-homoserine + ATP = O-phospho-L-homoserine + ADP + H(+). It functions in the pathway amino-acid biosynthesis; L-threonine biosynthesis; L-threonine from L-aspartate: step 4/5. Its function is as follows. Catalyzes the ATP-dependent phosphorylation of L-homoserine to L-homoserine phosphate. This chain is Homoserine kinase, found in Staphylococcus saprophyticus subsp. saprophyticus (strain ATCC 15305 / DSM 20229 / NCIMB 8711 / NCTC 7292 / S-41).